A 255-amino-acid polypeptide reads, in one-letter code: 14-3-3 protein 5 (255 aa).

This sequence belongs to the 14-3-3 family. As to quaternary structure, homodimer.

In Solanum lycopersicum (Tomato), this protein is 14-3-3 protein 5 (TFT5).